The chain runs to 87 residues: Putative regulatory protein GWCH70_1057 (87 aa).

The protein belongs to the RemA family.

The sequence is that of Putative regulatory protein GWCH70_1057 from Geobacillus sp. (strain WCH70).